Consider the following 884-residue polypeptide: Alanine--tRNA ligase (884 aa).

The Zn(2+) site is built by histidine 572, histidine 576, cysteine 673, and histidine 677.

The protein belongs to the class-II aminoacyl-tRNA synthetase family. Zn(2+) serves as cofactor.

Its subcellular location is the cytoplasm. The catalysed reaction is tRNA(Ala) + L-alanine + ATP = L-alanyl-tRNA(Ala) + AMP + diphosphate. Functionally, catalyzes the attachment of alanine to tRNA(Ala) in a two-step reaction: alanine is first activated by ATP to form Ala-AMP and then transferred to the acceptor end of tRNA(Ala). Also edits incorrectly charged Ser-tRNA(Ala) and Gly-tRNA(Ala) via its editing domain. In Xylella fastidiosa (strain M23), this protein is Alanine--tRNA ligase.